The sequence spans 810 residues: Type I restriction enzyme EcoAI endonuclease subunit (810 aa).

The Helicase ATP-binding domain occupies 183 to 343 (EAVSNGQNRV…TDYFGDPVYV (161 aa)). 197-203 (ATGTGKT) lines the ATP pocket. In terms of domain architecture, Helicase C-terminal spans 412–575 (TITDYLKRTN…DIADPESDFE (164 aa)). Acidic residues predominate over residues 578 to 588 (LEEISEHDEEQ). Residues 578–608 (LEEISEHDEEQVTGVDEPPAPPYQVTDTDDV) are disordered.

The protein belongs to the HsdR family. As to quaternary structure, the type I restriction/modification system is composed of three polypeptides R, M and S. The restriction enzyme has stoichiometry R(2)M(2)S(1) while the methyltransferase is M(2)S(1).

The catalysed reaction is Endonucleolytic cleavage of DNA to give random double-stranded fragments with terminal 5'-phosphates, ATP is simultaneously hydrolyzed.. The subtype B restriction (R) subunit of a type I restriction enzyme that recognizes 5'-GAGN(7)GTCA-3' and cleaves a random distance away. Subunit R is required for both nuclease and ATPase activities, but not for modification. After locating a non-methylated recognition site, the enzyme complex serves as a molecular motor that translocates DNA in an ATP-dependent manner until a collision occurs that triggers cleavage. The polypeptide is Type I restriction enzyme EcoAI endonuclease subunit (Escherichia coli).